The following is a 213-amino-acid chain: Ribosomal RNA small subunit methyltransferase G (213 aa).

S-adenosyl-L-methionine is bound by residues glycine 72, phenylalanine 77, 125-126, and arginine 141; that span reads IE.

Belongs to the methyltransferase superfamily. RNA methyltransferase RsmG family.

It localises to the cytoplasm. The catalysed reaction is guanosine(527) in 16S rRNA + S-adenosyl-L-methionine = N(7)-methylguanosine(527) in 16S rRNA + S-adenosyl-L-homocysteine. Functionally, specifically methylates the N7 position of guanine in position 527 of 16S rRNA. The sequence is that of Ribosomal RNA small subunit methyltransferase G from Sinorhizobium medicae (strain WSM419) (Ensifer medicae).